Consider the following 448-residue polypeptide: Probable metal transport system membrane protein CPn_0347/CP_0413/CPj0347/CpB0354 (448 aa).

Helical transmembrane passes span 15 to 35 (FLAV…LLIS), 47 to 67 (ASYP…SLQA), 69 to 89 (IFWI…IIVF), 100 to 120 (SALC…ASYV), 144 to 164 (FLEA…LWWW), 193 to 213 (LIFI…VLIS), 233 to 253 (ILIL…YISV), and 270 to 290 (LPTG…CLLF).

It belongs to the ABC-3 integral membrane protein family.

It is found in the cell inner membrane. Functionally, part of an ATP-driven transport system CPn_0346/CPn_0347/CPn_0348/CPn_0349 for a metal. The protein is Probable metal transport system membrane protein CPn_0347/CP_0413/CPj0347/CpB0354 of Chlamydia pneumoniae (Chlamydophila pneumoniae).